The primary structure comprises 359 residues: Alpha-N-acetylneuraminide alpha-2,8-sialyltransferase (359 aa).

At 1–28 the chain is on the cytoplasmic side; sequence MWGRWRGAGGRRGVAQPVIPQMKLLGGR. Residues 29–49 traverse the membrane as a helical; Signal-anchor for type II membrane protein segment; that stretch reads VPLGASALGLLIVCWFYIFPG. At 50 to 359 the chain is on the lumenal side; it reads GERLPGHKEM…KKDVSSKKPH (310 aa). Residues Asn-73 and Asn-121 are each glycosylated (N-linked (GlcNAc...) asparagine). 2 cysteine pairs are disulfide-bonded: Cys-140–Cys-289 and Cys-154–Cys-349. CMP-N-acetyl-beta-neuraminate contacts are provided by Asn-145 and Asn-168. N-linked (GlcNAc...) asparagine glycosylation occurs at Asn-247. Positions 276, 277, 278, 298, and 312 each coordinate CMP-N-acetyl-beta-neuraminate. Catalysis depends on His-324, which acts as the Proton donor/acceptor.

The protein belongs to the glycosyltransferase 29 family. As to expression, expressed in the dorsal blastopore lip and in the presumptive neuroectoderm in stage 11 embryos. During gastrulation, strongly expressed in the involuting mesoderm. At stages 13 and 16, expressed in the neural plate and neural fold, paraxial mesoderm and notochord. At stages 19 and 22 (neural tube and early tailbud), strongly expressed in the neural tube and notochord. At the tadpole stage, expressed in the head region, branchial arches and otic and optic primordia. Also localized in the notochord and weakly expressed in the somites. In adults, expressed in the brain and ovary. Isoform 2 (short) is expressed at a low level in the adult testis and muscle, and at a high level in the skin. Isoform 1 (long) is expressed at a high level in the adult lung and kidney. Both isoforms 1 and 2 are expressed in the gut and liver.

It is found in the golgi apparatus membrane. It carries out the reaction an N-acetyl-alpha-neuraminyl-(2-&gt;3)-beta-D-galactosyl derivative + CMP-N-acetyl-beta-neuraminate = an N-acetyl-alpha-neuraminyl-(2-&gt;8)-N-acetyl-alpha-neuraminyl-(2-&gt;3)-beta-D-galactosyl derivative + CMP + H(+). The catalysed reaction is a ganglioside GM3 (d18:1(4E)) + CMP-N-acetyl-beta-neuraminate = a ganglioside GD3 (d18:1(4E)) + CMP + H(+). The enzyme catalyses a ganglioside GD3 (d18:1(4E)) + CMP-N-acetyl-beta-neuraminate = a ganglioside GT3 (d18:1(4E)) + CMP + H(+). It catalyses the reaction a ganglioside GD1a (d18:1(4E)) + CMP-N-acetyl-beta-neuraminate = a ganglioside GT1a (d18:1(4E)) + CMP + H(+). It carries out the reaction a ganglioside GT1b (d18:1(4E)) + CMP-N-acetyl-beta-neuraminate = a ganglioside GQ1b (d18:1(4E)) + CMP + H(+). The catalysed reaction is a ganglioside GM1b (d18:1(4E)) + CMP-N-acetyl-beta-neuraminate = a ganglioside GD1c (d18:1(4E)) + CMP + H(+). The enzyme catalyses a ganglioside GD3 + CMP-N-acetyl-beta-neuraminate = a ganglioside GT3 + CMP + H(+). It catalyses the reaction [alpha-N-acetylneuraminyl-(2-&gt;8)](n)-alpha-N-acetylneuraminyl-(2-&gt;8)-alpha-N-acetylneuraminyl-(2-&gt;3)-beta-D-galactosyl-(1-&gt;4)-beta-D-glucosyl-(1&lt;-&gt;1)-ceramide + CMP-N-acetyl-beta-neuraminate = [alpha-N-acetylneuraminyl-(2-&gt;8)](n+1)-alpha-N-acetylneuraminyl-(2-&gt;8)-alpha-N-acetylneuraminyl-(2-&gt;3)-beta-D-galactosyl-(1-&gt;4)-beta-D-glucosyl-(1&lt;-&gt;1)-ceramide + CMP + H(+). It functions in the pathway protein modification; protein glycosylation. Its pathway is lipid metabolism; sphingolipid metabolism. Functionally, catalyzes the addition of sialic acid in alpha 2,8-linkage to the sialic acid moiety of the ganglioside GM3 to form ganglioside GD3; gangliosides are a subfamily of complex glycosphingolipds that contain one or more residues of sialic acid. Glycosphingolipids are required for convergence extension movements during early development. Can catalyze the addition of a second alpha-2,8- sialic acid to GD3 to form GT3. Can use GM1b, GD1a and GT1b as acceptor substrates to synthesize GD1c, GT1a and GQ1b respectively. In Xenopus laevis (African clawed frog), this protein is Alpha-N-acetylneuraminide alpha-2,8-sialyltransferase.